Reading from the N-terminus, the 105-residue chain is Small ribosomal subunit protein eS10B (105 aa).

It belongs to the eukaryotic ribosomal protein eS10 family. As to quaternary structure, component of the small ribosomal subunit (SSU). Mature yeast ribosomes consist of a small (40S) and a large (60S) subunit. The 40S small subunit contains 1 molecule of ribosomal RNA (18S rRNA) and 33 different proteins (encoded by 57 genes). The large 60S subunit contains 3 rRNA molecules (25S, 5.8S and 5S rRNA) and 46 different proteins (encoded by 81 genes). eS10 interacts with GCN1 (via middle region); this interaction is direct and promotes GCN2 kinase activity. In terms of processing, the N-terminus is not modified.

The protein localises to the cytoplasm. In terms of biological role, component of the ribosome, a large ribonucleoprotein complex responsible for the synthesis of proteins in the cell. The small ribosomal subunit (SSU) binds messenger RNAs (mRNAs) and translates the encoded message by selecting cognate aminoacyl-transfer RNA (tRNA) molecules. The large subunit (LSU) contains the ribosomal catalytic site termed the peptidyl transferase center (PTC), which catalyzes the formation of peptide bonds, thereby polymerizing the amino acids delivered by tRNAs into a polypeptide chain. The nascent polypeptides leave the ribosome through a tunnel in the LSU and interact with protein factors that function in enzymatic processing, targeting, and the membrane insertion of nascent chains at the exit of the ribosomal tunnel. eS10 plays a role as a positive regulator of the GCN2 kinase activity by stimulating GCN1-mediated GCN2 activation. The polypeptide is Small ribosomal subunit protein eS10B (Saccharomyces cerevisiae (strain ATCC 204508 / S288c) (Baker's yeast)).